The chain runs to 338 residues: Ferrochelatase (338 aa).

Fe cation contacts are provided by His-202 and Glu-283.

This sequence belongs to the ferrochelatase family.

Its subcellular location is the cytoplasm. It catalyses the reaction heme b + 2 H(+) = protoporphyrin IX + Fe(2+). It functions in the pathway porphyrin-containing compound metabolism; protoheme biosynthesis; protoheme from protoporphyrin-IX: step 1/1. Its function is as follows. Catalyzes the ferrous insertion into protoporphyrin IX. The protein is Ferrochelatase of Acinetobacter baumannii (strain AB307-0294).